The following is a 62-amino-acid chain: Large ribosomal subunit protein bL28 (62 aa).

It belongs to the bacterial ribosomal protein bL28 family.

The sequence is that of Large ribosomal subunit protein bL28 from Streptococcus gordonii (strain Challis / ATCC 35105 / BCRC 15272 / CH1 / DL1 / V288).